A 96-amino-acid chain; its full sequence is Teretoxin Tan6.14 (96 aa).

Residues 1-21 form the signal peptide; the sequence is MRPLLVFVLMVSVSLAFSLEG. Positions 22 to 60 are excised as a propeptide; it reads MPNNGGDSVASITANQARRFKRNPLFSFAQHSLVDLKAR.

In terms of processing, contains 3 disulfide bonds. In terms of tissue distribution, expressed by the venom duct.

Its subcellular location is the secreted. The polypeptide is Teretoxin Tan6.14 (Terebra anilis (Auger snail)).